Here is a 203-residue protein sequence, read N- to C-terminus: Cytochrome c oxidase assembly protein CtaG (203 aa).

The Cytoplasmic segment spans residues 1–19; it reads MDAGKAERRAGNGRRTDGR. Residues 20–42 traverse the membrane as a helical; Signal-anchor for type II membrane protein segment; that stretch reads RHLVVAAACAAFIAAMVGVTYAS. Topologically, residues 43–203 are periplasmic; the sequence is VPLYAMFCAL…AAARASGTGG (161 aa).

It belongs to the COX11/CtaG family.

The protein localises to the cell inner membrane. Its function is as follows. Exerts its effect at some terminal stage of cytochrome c oxidase synthesis, probably by being involved in the insertion of the copper B into subunit I. The chain is Cytochrome c oxidase assembly protein CtaG from Xanthobacter autotrophicus (strain ATCC BAA-1158 / Py2).